Reading from the N-terminus, the 212-residue chain is Thiamine-phosphate synthase (212 aa).

4-amino-2-methyl-5-(diphosphooxymethyl)pyrimidine is bound by residues 40-44 (QFREK) and Asn75. Positions 76 and 95 each coordinate Mg(2+). Residue Ser113 participates in 4-amino-2-methyl-5-(diphosphooxymethyl)pyrimidine binding. Residue 139 to 141 (TIS) coordinates 2-[(2R,5Z)-2-carboxy-4-methylthiazol-5(2H)-ylidene]ethyl phosphate. Lys142 contacts 4-amino-2-methyl-5-(diphosphooxymethyl)pyrimidine. Residues Gly171 and 191–192 (IS) each bind 2-[(2R,5Z)-2-carboxy-4-methylthiazol-5(2H)-ylidene]ethyl phosphate.

It belongs to the thiamine-phosphate synthase family. Mg(2+) is required as a cofactor.

It catalyses the reaction 2-[(2R,5Z)-2-carboxy-4-methylthiazol-5(2H)-ylidene]ethyl phosphate + 4-amino-2-methyl-5-(diphosphooxymethyl)pyrimidine + 2 H(+) = thiamine phosphate + CO2 + diphosphate. It carries out the reaction 2-(2-carboxy-4-methylthiazol-5-yl)ethyl phosphate + 4-amino-2-methyl-5-(diphosphooxymethyl)pyrimidine + 2 H(+) = thiamine phosphate + CO2 + diphosphate. The catalysed reaction is 4-methyl-5-(2-phosphooxyethyl)-thiazole + 4-amino-2-methyl-5-(diphosphooxymethyl)pyrimidine + H(+) = thiamine phosphate + diphosphate. The protein operates within cofactor biosynthesis; thiamine diphosphate biosynthesis; thiamine phosphate from 4-amino-2-methyl-5-diphosphomethylpyrimidine and 4-methyl-5-(2-phosphoethyl)-thiazole: step 1/1. Condenses 4-methyl-5-(beta-hydroxyethyl)thiazole monophosphate (THZ-P) and 2-methyl-4-amino-5-hydroxymethyl pyrimidine pyrophosphate (HMP-PP) to form thiamine monophosphate (TMP). This is Thiamine-phosphate synthase from Staphylococcus haemolyticus (strain JCSC1435).